Reading from the N-terminus, the 196-residue chain is Auxin-induced protein 22B (196 aa).

The EAR-like (transcriptional repression) signature appears at 18–22 (LRLGL). Residues 44–74 (RQVRETSQDSVSISKASHHQQHVETVSAPPP) are disordered. A PB1 domain is found at 99–186 (GIFVKVSMDG…SCKRLRIMKG (88 aa)).

Belongs to the Aux/IAA family. As to quaternary structure, homodimers and heterodimers.

It localises to the nucleus. Functionally, aux/IAA proteins are short-lived transcriptional factors that function as repressors of early auxin response genes at low auxin concentrations. Repression is thought to result from the interaction with auxin response factors (ARFs), proteins that bind to the auxin-responsive promoter element (AuxRE). Formation of heterodimers with ARF proteins may alter their ability to modulate early auxin response genes expression. This chain is Auxin-induced protein 22B (AUX22B), found in Vigna radiata var. radiata (Mung bean).